The chain runs to 345 residues: Annexin A9 (345 aa).

4 Annexin repeats span residues 41–112, 113–184, 197–266, and 270–341; these read FSVD…ALLQ, PTAQ…ALAK, NLAE…GLAS, and NTPL…ALCR.

The protein belongs to the annexin family. Homodimer. Expressed in the stratified squamous skin epithelium, but not in epithelia of other types (at protein level).

Functionally, low affinity receptor for acetylcholine known to be targeted by disease-causing pemphigus vulgaris antibodies in keratinocytes. The sequence is that of Annexin A9 (ANXA9) from Homo sapiens (Human).